Here is a 451-residue protein sequence, read N- to C-terminus: Cobalamin reductase PduS (451 aa).

4Fe-4S ferredoxin-type domains lie at 255 to 284 (TVLS…HELS) and 300 to 330 (PQLL…MRIN). Residues Cys264, Cys267, Cys270, Cys274, Cys309, Cys312, Cys315, and Cys320 each contribute to the [4Fe-4S] cluster site.

Belongs to the PduS cobalamin reductase family. Monomeric when purified anaerobically, dimeric under aerobic conditions. Forms a complex with PduO. Interacts with PduT, probably via the N-terminus of PduS. [4Fe-4S] cluster is required as a cofactor. FMN serves as cofactor.

It localises to the bacterial microcompartment. It participates in polyol metabolism; 1,2-propanediol degradation. Functionally, a protein that aids in conversion of cob(III)alamin to cob(II)alamin and then to cob(I)alamin in the bacterial microcompartment (BMC) dedicated to 1,2-propanediol (1,2-PD) degradation. The latter step requires PduO. No free cob(I)alamin is released, suggesting a complex is formed with PduO that finishes conversion to adenosylcobalamin. PduS and PduO allow regeneration of the adenosylcobalamin cofactor within the BMC. Another study showed reduction of cob(II)alamin to cob(I)alamin in the absence of PduO. Both reactions require NADH. Cyanocobalamin (CN-Cbl) is not a substrate for the first reaction. Cobalamin reduction probably occurs spontaneously in the presence of free reduced flavin nucleotides, this protein may be involved in electron transfer for this reduction. In terms of biological role, the 1,2-PD-specific bacterial microcompartment (BMC) concentrates low levels of 1,2-PD catabolic enzymes, concentrates volatile reaction intermediates thus enhancing pathway flux and keeps the level of toxic, mutagenic propionaldehyde low. The protein is Cobalamin reductase PduS of Salmonella typhimurium (strain LT2 / SGSC1412 / ATCC 700720).